A 229-amino-acid polypeptide reads, in one-letter code: Urease accessory protein UreF (229 aa).

The protein belongs to the UreF family. As to quaternary structure, ureD, UreF and UreG form a complex that acts as a GTP-hydrolysis-dependent molecular chaperone, activating the urease apoprotein by helping to assemble the nickel containing metallocenter of UreC. The UreE protein probably delivers the nickel.

Its subcellular location is the cytoplasm. Functionally, required for maturation of urease via the functional incorporation of the urease nickel metallocenter. This is Urease accessory protein UreF from Staphylococcus aureus (strain USA300).